A 140-amino-acid polypeptide reads, in one-letter code: Nucleoside diphosphate kinase (140 aa).

ATP is bound by residues Lys11, Phe59, Arg87, Thr93, Arg104, and Asn114. His117 acts as the Pros-phosphohistidine intermediate in catalysis.

The protein belongs to the NDK family. Homotetramer. The cofactor is Mg(2+).

The protein localises to the cytoplasm. The enzyme catalyses a 2'-deoxyribonucleoside 5'-diphosphate + ATP = a 2'-deoxyribonucleoside 5'-triphosphate + ADP. It carries out the reaction a ribonucleoside 5'-diphosphate + ATP = a ribonucleoside 5'-triphosphate + ADP. In terms of biological role, major role in the synthesis of nucleoside triphosphates other than ATP. The ATP gamma phosphate is transferred to the NDP beta phosphate via a ping-pong mechanism, using a phosphorylated active-site intermediate. The polypeptide is Nucleoside diphosphate kinase (Francisella philomiragia subsp. philomiragia (strain ATCC 25017 / CCUG 19701 / FSC 153 / O#319-036)).